Here is a 103-residue protein sequence, read N- to C-terminus: UPF0145 protein BCE_1095 (103 aa).

Belongs to the UPF0145 family.

In Bacillus cereus (strain ATCC 10987 / NRS 248), this protein is UPF0145 protein BCE_1095.